Reading from the N-terminus, the 158-residue chain is C-type lectin BfL-2 (158 aa).

Residues 1–21 (MGHFTFIGLCLLAMFLSLSGA) form the signal peptide. 4 disulfide bridges follow: Cys26/Cys37, Cys54/Cys154, Cys61/Cys156, and Cys129/Cys146. In terms of domain architecture, C-type lectin spans 33 to 155 (KNGLCYKVFS…CETLHPFICQ (123 aa)). Positions 119–121 (EPN) match the Mannose-binding motif. Residue Asn121 is glycosylated (N-linked (GlcNAc...) asparagine). 3 residues coordinate Ca(2+): Glu127, Asn142, and Asp143.

The protein belongs to the true venom lectin family. Homodimer; non-covalently linked. Expressed by the venom gland.

Its subcellular location is the secreted. Functionally, mannose-binding lectin which recognizes specific carbohydrate structures and agglutinates a variety of animal cells by binding to cell-surface glycoproteins and glycolipids. May be a calcium-dependent lectin. This Bungarus fasciatus (Banded krait) protein is C-type lectin BfL-2.